The primary structure comprises 493 residues: Guanosine-5'-triphosphate,3'-diphosphate pyrophosphatase (493 aa).

It belongs to the GppA/Ppx family. GppA subfamily.

The enzyme catalyses guanosine 3'-diphosphate 5'-triphosphate + H2O = guanosine 3',5'-bis(diphosphate) + phosphate + H(+). Its pathway is purine metabolism; ppGpp biosynthesis; ppGpp from GTP: step 2/2. Its function is as follows. Catalyzes the conversion of pppGpp to ppGpp. Guanosine pentaphosphate (pppGpp) is a cytoplasmic signaling molecule which together with ppGpp controls the 'stringent response', an adaptive process that allows bacteria to respond to amino acid starvation, resulting in the coordinated regulation of numerous cellular activities. This Salmonella heidelberg (strain SL476) protein is Guanosine-5'-triphosphate,3'-diphosphate pyrophosphatase.